Here is a 474-residue protein sequence, read N- to C-terminus: UDP-glycosyltransferase 71E1 (474 aa).

Residues serine 275, 341 to 342 (WA), 359 to 367 (HCGWNSTLE), and 381 to 384 (YAEQ) each bind UDP-alpha-D-glucose.

The protein belongs to the UDP-glycosyltransferase family.

Functionally, may glycosylate diterpenes or flavonols in leaves. The protein is UDP-glycosyltransferase 71E1 of Stevia rebaudiana (Stevia).